The chain runs to 422 residues: Isocitrate dehydrogenase [NADP] (422 aa).

Thr94 contacts NADP(+). Positions 103, 105, 109, 119, and 143 each coordinate D-threo-isocitrate. Asp310 is a binding site for Mg(2+). NADP(+) is bound by residues 344–350 (HGTAPKY), Asn357, Tyr396, and Arg400.

This sequence belongs to the isocitrate and isopropylmalate dehydrogenases family. As to quaternary structure, homodimer. It depends on Mg(2+) as a cofactor. The cofactor is Mn(2+).

It carries out the reaction D-threo-isocitrate + NADP(+) = 2-oxoglutarate + CO2 + NADPH. Functionally, catalyzes the oxidative decarboxylation of isocitrate to 2-oxoglutarate and carbon dioxide with the concomitant reduction of NADP(+). The sequence is that of Isocitrate dehydrogenase [NADP] (icd) from Staphylococcus aureus (strain MSSA476).